The chain runs to 98 residues: DNA-binding protein Fis (98 aa).

Residues 74–93 (QTRAALMMGINRGTLRKKLK) constitute a DNA-binding region (H-T-H motif).

Belongs to the transcriptional regulatory Fis family. As to quaternary structure, homodimer.

Activates ribosomal RNA transcription. Plays a direct role in upstream activation of rRNA promoters. This chain is DNA-binding protein Fis, found in Enterobacter sp. (strain 638).